We begin with the raw amino-acid sequence, 91 residues long: Elongation factor 1-beta (91 aa).

It belongs to the EF-1-beta/EF-1-delta family.

Its function is as follows. Promotes the exchange of GDP for GTP in EF-1-alpha/GDP, thus allowing the regeneration of EF-1-alpha/GTP that could then be used to form the ternary complex EF-1-alpha/GTP/AAtRNA. This chain is Elongation factor 1-beta, found in Thermococcus kodakarensis (strain ATCC BAA-918 / JCM 12380 / KOD1) (Pyrococcus kodakaraensis (strain KOD1)).